A 395-amino-acid chain; its full sequence is SWI/SNF and RSC complexes subunit ssr4 (395 aa).

Residues 182 to 230 (KKHIPEGTALSQRETLPNMGSAQMKSQSRTPSFSNVTTSPVPPINSNAT) are disordered. The span at 190–230 (ALSQRETLPNMGSAQMKSQSRTPSFSNVTTSPVPPINSNAT) shows a compositional bias: polar residues.

Belongs to the SSR4 family. As to quaternary structure, component of the RSC complex composed of at least arp9, arp42, rsc1, rsc4, rsc7, rsc9, rsc58, sfh1, snf21, ssr1, ssr2, ssr3 and ssr4. The complex interacts with histone and histone variant components of centromeric chromatin. Component of the SWI/SNF global transcription activator complex composed of at least arp9, arp42, snf5, snf22, snf30, sbf59, sol1, ssr1, ssr2, ssr3, ssr4 and tfg3.

It is found in the cytoplasm. The protein resides in the nucleus. Functionally, component of the chromatin structure remodeling complex (RSC), which is involved in transcription regulation and nucleosome positioning. Controls particularly membrane and organelle development genes. Part of the SWI/SNF complex, an ATP-dependent chromatin remodeling complex, required for the positive and negative regulation of gene expression of a large number of genes. It changes chromatin structure by altering DNA-histone contacts within a nucleosome, leading eventually to a change in nucleosome position, thus facilitating or repressing binding of gene-specific transcription factors. This Schizosaccharomyces pombe (strain 972 / ATCC 24843) (Fission yeast) protein is SWI/SNF and RSC complexes subunit ssr4 (ssr4).